A 247-amino-acid polypeptide reads, in one-letter code: uncharacterized protein (247 aa).

This is an uncharacterized protein from Saccharomyces cerevisiae (strain ATCC 204508 / S288c) (Baker's yeast).